Consider the following 525-residue polypeptide: GMP synthase [glutamine-hydrolyzing] (525 aa).

The Glutamine amidotransferase type-1 domain maps to 9–207; the sequence is RILILDFGSQ…VVDICKCEKL (199 aa). The active-site Nucleophile is the cysteine 86. Catalysis depends on residues histidine 181 and glutamate 183. Residues 208–400 form the GMPS ATP-PPase domain; the sequence is WTSASIIDDA…LGLPYDMLYR (193 aa). 235-241 serves as a coordination point for ATP; the sequence is SGGVDSS.

As to quaternary structure, homodimer.

It catalyses the reaction XMP + L-glutamine + ATP + H2O = GMP + L-glutamate + AMP + diphosphate + 2 H(+). It functions in the pathway purine metabolism; GMP biosynthesis; GMP from XMP (L-Gln route): step 1/1. Its function is as follows. Catalyzes the synthesis of GMP from XMP. This Colwellia psychrerythraea (strain 34H / ATCC BAA-681) (Vibrio psychroerythus) protein is GMP synthase [glutamine-hydrolyzing].